A 168-amino-acid chain; its full sequence is Photosystem I assembly protein Ycf3 (168 aa).

3 TPR repeats span residues 35 to 68 (AFTYYRDGMSAQSEGNYAEALQNYYEAMRLEIDP), 72 to 105 (SYILYNIGLIHTSNGEHTKALEYYFRALERNPFL), and 120 to 153 (GEQAIRQGDSEIAEAWFDQAAEYWKQAIALTPGN).

Belongs to the Ycf3 family.

Its subcellular location is the plastid. The protein resides in the chloroplast thylakoid membrane. Functionally, essential for the assembly of the photosystem I (PSI) complex. May act as a chaperone-like factor to guide the assembly of the PSI subunits. This chain is Photosystem I assembly protein Ycf3, found in Populus alba (White poplar).